The primary structure comprises 597 residues: Elongation factor 4 (597 aa).

A tr-type G domain is found at Ser4–Lys181. GTP contacts are provided by residues Asp16–Thr21 and Asn128–Asp131.

This sequence belongs to the TRAFAC class translation factor GTPase superfamily. Classic translation factor GTPase family. LepA subfamily.

The protein localises to the cell membrane. It catalyses the reaction GTP + H2O = GDP + phosphate + H(+). Its function is as follows. Required for accurate and efficient protein synthesis under certain stress conditions. May act as a fidelity factor of the translation reaction, by catalyzing a one-codon backward translocation of tRNAs on improperly translocated ribosomes. Back-translocation proceeds from a post-translocation (POST) complex to a pre-translocation (PRE) complex, thus giving elongation factor G a second chance to translocate the tRNAs correctly. Binds to ribosomes in a GTP-dependent manner. The polypeptide is Elongation factor 4 (Mycoplasmopsis agalactiae (strain NCTC 10123 / CIP 59.7 / PG2) (Mycoplasma agalactiae)).